The primary structure comprises 342 residues: Protein RecA (342 aa).

Residue 65 to 72 (GPESSGKT) coordinates ATP.

Belongs to the RecA family.

The protein localises to the cytoplasm. In terms of biological role, can catalyze the hydrolysis of ATP in the presence of single-stranded DNA, the ATP-dependent uptake of single-stranded DNA by duplex DNA, and the ATP-dependent hybridization of homologous single-stranded DNAs. It interacts with LexA causing its activation and leading to its autocatalytic cleavage. In Teredinibacter turnerae (strain ATCC 39867 / T7901), this protein is Protein RecA.